The primary structure comprises 705 residues: Ribosomal RNA large subunit methyltransferase K/L (705 aa).

The THUMP domain maps to 42 to 154 (LAQKVCLSTR…RYGVSMYIDY (113 aa)).

The protein belongs to the methyltransferase superfamily. RlmKL family.

The protein resides in the cytoplasm. It catalyses the reaction guanosine(2445) in 23S rRNA + S-adenosyl-L-methionine = N(2)-methylguanosine(2445) in 23S rRNA + S-adenosyl-L-homocysteine + H(+). The catalysed reaction is guanosine(2069) in 23S rRNA + S-adenosyl-L-methionine = N(2)-methylguanosine(2069) in 23S rRNA + S-adenosyl-L-homocysteine + H(+). Specifically methylates the guanine in position 2445 (m2G2445) and the guanine in position 2069 (m7G2069) of 23S rRNA. The protein is Ribosomal RNA large subunit methyltransferase K/L of Pseudoalteromonas translucida (strain TAC 125).